The sequence spans 392 residues: Sulfate adenylyltransferase (392 aa).

This sequence belongs to the sulfate adenylyltransferase family.

The catalysed reaction is sulfate + ATP + H(+) = adenosine 5'-phosphosulfate + diphosphate. Its pathway is sulfur metabolism; hydrogen sulfide biosynthesis; sulfite from sulfate: step 1/3. The polypeptide is Sulfate adenylyltransferase (Trichormus variabilis (strain ATCC 29413 / PCC 7937) (Anabaena variabilis)).